A 431-amino-acid polypeptide reads, in one-letter code: SH2 domain-containing protein 4B (431 aa).

The interval 201-235 is disordered; that stretch reads QASENEEREWEEQLRRSKAADEERSRRAQRARDEY. The segment covering 211–235 has biased composition (basic and acidic residues); the sequence is EEQLRRSKAADEERSRRAQRARDEY. The SH2 domain occupies 325–417; the sequence is WFHGIISRES…SGGELLQEPC (93 aa).

The protein is SH2 domain-containing protein 4B (Sh2d4b) of Mus musculus (Mouse).